Here is a 122-residue protein sequence, read N- to C-terminus: Large ribosomal subunit protein uL14 (122 aa).

The protein belongs to the universal ribosomal protein uL14 family. Part of the 50S ribosomal subunit. Forms a cluster with proteins L3 and L19. In the 70S ribosome, L14 and L19 interact and together make contacts with the 16S rRNA in bridges B5 and B8.

Binds to 23S rRNA. Forms part of two intersubunit bridges in the 70S ribosome. The chain is Large ribosomal subunit protein uL14 from Desulfovibrio desulfuricans (strain ATCC 27774 / DSM 6949 / MB).